Consider the following 405-residue polypeptide: Arginine biosynthesis bifunctional protein ArgJ (405 aa).

The substrate site is built by Thr-152, Lys-178, Thr-189, Glu-276, Asn-400, and Thr-405. The active-site Nucleophile is Thr-189.

The protein belongs to the ArgJ family. Heterotetramer of two alpha and two beta chains.

The protein localises to the cytoplasm. The enzyme catalyses N(2)-acetyl-L-ornithine + L-glutamate = N-acetyl-L-glutamate + L-ornithine. It carries out the reaction L-glutamate + acetyl-CoA = N-acetyl-L-glutamate + CoA + H(+). The protein operates within amino-acid biosynthesis; L-arginine biosynthesis; L-ornithine and N-acetyl-L-glutamate from L-glutamate and N(2)-acetyl-L-ornithine (cyclic): step 1/1. Its pathway is amino-acid biosynthesis; L-arginine biosynthesis; N(2)-acetyl-L-ornithine from L-glutamate: step 1/4. In terms of biological role, catalyzes two activities which are involved in the cyclic version of arginine biosynthesis: the synthesis of N-acetylglutamate from glutamate and acetyl-CoA as the acetyl donor, and of ornithine by transacetylation between N(2)-acetylornithine and glutamate. The chain is Arginine biosynthesis bifunctional protein ArgJ from Pseudomonas fluorescens (strain ATCC BAA-477 / NRRL B-23932 / Pf-5).